A 227-amino-acid polypeptide reads, in one-letter code: (S)-2-haloacid dehalogenase 1 (227 aa).

Asp-10 functions as the Nucleophile in the catalytic mechanism. An (S)-2-haloacid-binding positions include 11–12 (AY), Arg-41, and 118–119 (SN). Positions 175–180 (SSNAWD) are important for catalytic activity.

Belongs to the HAD-like hydrolase superfamily. S-2-haloalkanoic acid dehalogenase family.

The catalysed reaction is an (S)-2-haloacid + H2O = a (2R)-2-hydroxycarboxylate + a halide anion + H(+). It catalyses the reaction (S)-2-chloropropanoate + H2O = (R)-lactate + chloride + H(+). Its function is as follows. Catalyzes the hydrolytic dehalogenation of small (S)-2-haloalkanoic acids to yield the corresponding (R)-2-hydroxyalkanoic acids. Acts on acids of short chain lengths, C(2) to C(4), with inversion of configuration at C-2. Active with 2-halogenated carboxylic acids and converts only the S-isomer (or L-isomer) of 2-chloropropionic acid with inversion of configuration to produce R-lactate (or D-isomer). The polypeptide is (S)-2-haloacid dehalogenase 1 (Pseudomonas sp. (strain CBS-3)).